Consider the following 1000-residue polypeptide: Sop-2-related protein 1 (1000 aa).

Disordered regions lie at residues 355–374 (KIMK…QYQQ), 379–422 (HQQH…GPSE), and 466–509 (APSE…VARG). The segment covering 390 to 404 (SSSSVPSTSSPSCSS) has biased composition (low complexity). Over residues 406 to 415 (ANRKEMETVR) the composition is skewed to basic and acidic residues. Residues 489-502 (GPSQQQQIPGTSQQ) are compositionally biased toward low complexity. The segment at 633–720 (REQILPQQYM…LNTSSVQPSE (88 aa)) is RNA-binding. The segment at 948 to 1000 (HRMHSQRPPSMGNSSTSSEASSTSPTNAATATSSPASNRPTTSTAQPPTLNPT) is disordered. Residues 960 to 992 (NSSTSSEASSTSPTNAATATSSPASNRPTTSTA) are compositionally biased toward low complexity.

Binds through its N-terminal region to the N-terminal region of sop-2.

It localises to the nucleus. Acts synergistically with sop-2 to maintain the transcriptionally repressive state of homeotic genes throughout development. Not required to initiate repression, but to maintain it during later stages of development. Also required to repress expression of other genes. Binds RNA in a sequence-independent manner. The sequence is that of Sop-2-related protein 1 (sor-1) from Caenorhabditis elegans.